An 88-amino-acid polypeptide reads, in one-letter code: Small ribosomal subunit protein bS16c (88 aa).

It belongs to the bacterial ribosomal protein bS16 family.

Its subcellular location is the plastid. It localises to the chloroplast. This is Small ribosomal subunit protein bS16c from Calycanthus floridus var. glaucus (Eastern sweetshrub).